The following is a 524-amino-acid chain: Cytochrome P450 monooxygenase lnaC (524 aa).

The chain crosses the membrane as a helical span at residues A16–A36. The N-linked (GlcNAc...) asparagine glycan is linked to N150. C471 is a heme binding site.

Belongs to the cytochrome P450 family. Requires heme as cofactor.

It is found in the membrane. It functions in the pathway secondary metabolite biosynthesis. In terms of biological role, cytochrome P450 monooxygenase; part of the lna gene cluster that mediates the biosynthesis of diastereomeric piperazines. Lna and lnb clusters encode sets of enzymes that produce overlapping sets of previously undescribed metabolites such as piperazinomycin-like metabolites or morpholine. The lna and lnb biosynthetic pathways appear to be part of a signaling network that controls the formation of sclerotia, a resilient overwintering structure. One primary function of the non-canonical nonribosomal peptide synthetases lnaA and lnbA consists in the reduction of L-tyrosine. The presence in the clusters of tailoring enzymes such as the oxidoreductases lnaB, lnbB, lnaE or lnbE, as well as of the cytochrome P450 monooxygenases lnaC, lnaD, or lnbC, might explain formation of various diastereomeric piperazines. This is Cytochrome P450 monooxygenase lnaC from Aspergillus flavus (strain ATCC 200026 / FGSC A1120 / IAM 13836 / NRRL 3357 / JCM 12722 / SRRC 167).